The chain runs to 33 residues: Photosystem II reaction center protein Psb30 (33 aa).

The chain crosses the membrane as a helical span at residues 5-25 (VIAQLTMLTIAVITGPLVIFF).

This sequence belongs to the Psb30/Ycf12 family. As to quaternary structure, PSII is composed of 1 copy each of membrane proteins PsbA, PsbB, PsbC, PsbD, PsbE, PsbF, PsbH, PsbI, PsbJ, PsbK, PsbL, PsbM, PsbT, PsbX, PsbY, PsbZ, Psb30/Ycf12, peripheral proteins of the oxygen-evolving complex and a large number of cofactors. It forms dimeric complexes.

The protein resides in the plastid. It localises to the chloroplast thylakoid membrane. Functionally, a core subunit of photosystem II (PSII), probably helps stabilize the reaction center. The sequence is that of Photosystem II reaction center protein Psb30 from Welwitschia mirabilis (Tree tumbo).